Consider the following 71-residue polypeptide: DNA gyrase inhibitor YacG (71 aa).

Zn(2+)-binding residues include Cys-7, Cys-10, Cys-26, and Cys-30.

It belongs to the DNA gyrase inhibitor YacG family. As to quaternary structure, interacts with GyrB. Zn(2+) is required as a cofactor.

In terms of biological role, inhibits all the catalytic activities of DNA gyrase by preventing its interaction with DNA. Acts by binding directly to the C-terminal domain of GyrB, which probably disrupts DNA binding by the gyrase. This is DNA gyrase inhibitor YacG from Shewanella amazonensis (strain ATCC BAA-1098 / SB2B).